The following is a 118-amino-acid chain: Peptidyl-prolyl cis-trans isomerase Pin1 (118 aa).

Disordered stretches follow at residues 1 to 37 (MSSE…ATTR) and 61 to 84 (LASR…GRGQ). One can recognise a PpiC domain in the interval 3–118 (SEKVRASHIL…SGVHIIKRTG (116 aa)). The segment covering 12 to 22 (LIKHQGSRRKS) has biased composition (basic residues).

Belongs to the PpiC/parvulin rotamase family. Post-translationally, the N-terminus is blocked. In terms of tissue distribution, expressed in roots, stems, leaves, flowers and seedlings.

Its subcellular location is the cytoplasm. The protein localises to the nucleus. It catalyses the reaction [protein]-peptidylproline (omega=180) = [protein]-peptidylproline (omega=0). Inhibited in vitro by juglone. Functionally, prolyl cis/trans isomerase with specificity for phospho-Ser-Pro bonds. The polypeptide is Peptidyl-prolyl cis-trans isomerase Pin1 (PARV12.8) (Digitalis lanata (Grecian foxglove)).